Reading from the N-terminus, the 333-residue chain is MMEQLLNSAPSWTNLVIFFGLGLALLFAVLAFVTYGILAERKVMGFMQGRYGPNQVGGRWGLLQTVADVLKLLLKEDTIPKAADKPLFILAPIIAFAPAFMVLATLPFTDAFQFADIGVGLLYYIAVSGLTTIGVVAGGWASNNKYALIGAMRAAAQMISYEIPLVVSVLGVVLLTGSLNLNDIVEAQKDVWYIFIQPIAFIVFFIAAVAELNRTPFDLPEAESELVAGFHVEYSGFRWAFFMLSEYVYLFAMAALTTILFLGGWHPVMFLDFIPGAVWFALKFSIVVFVLIWFRVTFPRLRADQLMELGWKVLFPVALLNIFVTALIQELFF.

The next 8 membrane-spanning stretches (helical) occupy residues 15–35 (LVIF…FVTY), 88–108 (FILA…TLPF), 117–137 (IGVG…GVVA), 159–179 (ISYE…TGSL), 191–211 (VWYI…AVAE), 250–270 (LFAM…PVMF), 273–293 (FIPG…VLIW), and 313–333 (VLFP…ELFF).

Belongs to the complex I subunit 1 family. In terms of assembly, NDH-1 is composed of 14 different subunits. Subunits NuoA, H, J, K, L, M, N constitute the membrane sector of the complex.

It is found in the cell membrane. It carries out the reaction a quinone + NADH + 5 H(+)(in) = a quinol + NAD(+) + 4 H(+)(out). Functionally, NDH-1 shuttles electrons from NADH, via FMN and iron-sulfur (Fe-S) centers, to quinones in the respiratory chain. The immediate electron acceptor for the enzyme in this species is believed to be ubiquinone. Couples the redox reaction to proton translocation (for every two electrons transferred, four hydrogen ions are translocated across the cytoplasmic membrane), and thus conserves the redox energy in a proton gradient. This subunit may bind ubiquinone. The protein is NADH-quinone oxidoreductase subunit H of Geobacillus sp. (strain WCH70).